We begin with the raw amino-acid sequence, 203 residues long: Ribosomal RNA large subunit methyltransferase E (203 aa).

Residues glycine 51, tryptophan 53, aspartate 69, aspartate 85, and aspartate 109 each coordinate S-adenosyl-L-methionine. The active-site Proton acceptor is lysine 149.

Belongs to the class I-like SAM-binding methyltransferase superfamily. RNA methyltransferase RlmE family.

The protein resides in the cytoplasm. The catalysed reaction is uridine(2552) in 23S rRNA + S-adenosyl-L-methionine = 2'-O-methyluridine(2552) in 23S rRNA + S-adenosyl-L-homocysteine + H(+). In terms of biological role, specifically methylates the uridine in position 2552 of 23S rRNA at the 2'-O position of the ribose in the fully assembled 50S ribosomal subunit. In Methanoculleus marisnigri (strain ATCC 35101 / DSM 1498 / JR1), this protein is Ribosomal RNA large subunit methyltransferase E.